The chain runs to 304 residues: 5-hmdU DNA kinase 2 (304 aa).

A disordered region spans residues 260–304; that stretch reads VGGQDPLAHRVPEKPQKASKTKNKAVAKEEPKTSSVSLLGLMRKA. Residues 266 to 275 are compositionally biased toward basic and acidic residues; sequence LAHRVPEKPQ.

Belongs to the thymidylate kinase family. 5-hmdU DNA kinase subfamily.

The enzyme catalyses 5-hydroxymethyl-dUMP in DNA + ATP = 5-phosphomethyl-dUMP in DNA + ADP + H(+). In terms of biological role, phosphorylates 5-hydroxymethyluracil (5hmdU) into 5-phosphomethyl-2'-deoxyuridine (5- PmdU) on DNA as a step in the pathway leading to thymidine hypermodifications in the viral genome. The phosphate is added internally to the DNA polymer. As a final result of the pathway of hypermodification, 5-aminoethoxy-2'-deoxymethyluridine (5-NeOmdU) substitutes for about 40% of the thymidines in the viral DNA. These modifications probably prevent degradation of viral genome by the host restriction-modification antiviral defense system. The polypeptide is 5-hmdU DNA kinase 2 (Salmonella typhi).